A 264-amino-acid polypeptide reads, in one-letter code: MSIVRSDKPFVLAGRTYQSRLLVGTGKYRDMEETRLAIEASGAEIVTFAVRRTNLGQIEGEPNLLEVLSPDRYTFLPNTAGCYDAVEAVRTCRLARELLDGHNLVKLEVLADQKTLFPNVIETLKAAEVLVKEGFDVMVYTSDDPIIARQLAEIGCIAVMPLAGLIGSGLGICNPYNLQIILEEAKIPVLVDAGVGTASDATISMELGCDAVLMNSAIAHAQQPIMMAEAMKHAIVAGRLAYLAGRMPKKLYASASSPLDGLIK.

The active-site Schiff-base intermediate with DXP is the K106. Residues G167, 193-194 (AG), and 215-216 (NS) contribute to the 1-deoxy-D-xylulose 5-phosphate site.

It belongs to the ThiG family. As to quaternary structure, homotetramer. Forms heterodimers with either ThiH or ThiS.

It localises to the cytoplasm. The catalysed reaction is [ThiS sulfur-carrier protein]-C-terminal-Gly-aminoethanethioate + 2-iminoacetate + 1-deoxy-D-xylulose 5-phosphate = [ThiS sulfur-carrier protein]-C-terminal Gly-Gly + 2-[(2R,5Z)-2-carboxy-4-methylthiazol-5(2H)-ylidene]ethyl phosphate + 2 H2O + H(+). The protein operates within cofactor biosynthesis; thiamine diphosphate biosynthesis. Its function is as follows. Catalyzes the rearrangement of 1-deoxy-D-xylulose 5-phosphate (DXP) to produce the thiazole phosphate moiety of thiamine. Sulfur is provided by the thiocarboxylate moiety of the carrier protein ThiS. In vitro, sulfur can be provided by H(2)S. The sequence is that of Thiazole synthase from Pseudomonas fluorescens (strain Pf0-1).